We begin with the raw amino-acid sequence, 357 residues long: S-adenosylmethionine:tRNA ribosyltransferase-isomerase (357 aa).

Belongs to the QueA family. Monomer.

It localises to the cytoplasm. The catalysed reaction is 7-aminomethyl-7-carbaguanosine(34) in tRNA + S-adenosyl-L-methionine = epoxyqueuosine(34) in tRNA + adenine + L-methionine + 2 H(+). Its pathway is tRNA modification; tRNA-queuosine biosynthesis. Its function is as follows. Transfers and isomerizes the ribose moiety from AdoMet to the 7-aminomethyl group of 7-deazaguanine (preQ1-tRNA) to give epoxyqueuosine (oQ-tRNA). The protein is S-adenosylmethionine:tRNA ribosyltransferase-isomerase of Proteus mirabilis (strain HI4320).